The following is a 180-amino-acid chain: NADH-quinone oxidoreductase subunit I (180 aa).

2 consecutive 4Fe-4S ferredoxin-type domains span residues 48-80 (IVLT…LQKA) and 90-119 (EFFR…LTPD). The [4Fe-4S] cluster site is built by Cys60, Cys63, Cys66, Cys70, Cys99, Cys102, Cys105, and Cys109.

The protein belongs to the complex I 23 kDa subunit family. As to quaternary structure, NDH-1 is composed of 13 different subunits. Subunits NuoA, H, J, K, L, M, N constitute the membrane sector of the complex. Requires [4Fe-4S] cluster as cofactor.

The protein localises to the cell inner membrane. The catalysed reaction is a quinone + NADH + 5 H(+)(in) = a quinol + NAD(+) + 4 H(+)(out). In terms of biological role, NDH-1 shuttles electrons from NADH, via FMN and iron-sulfur (Fe-S) centers, to quinones in the respiratory chain. The immediate electron acceptor for the enzyme in this species is believed to be ubiquinone. Couples the redox reaction to proton translocation (for every two electrons transferred, four hydrogen ions are translocated across the cytoplasmic membrane), and thus conserves the redox energy in a proton gradient. The chain is NADH-quinone oxidoreductase subunit I from Sodalis glossinidius (strain morsitans).